Here is a 101-residue protein sequence, read N- to C-terminus: Apolipoprotein C-II (101 aa).

Residues 1–22 form the signal peptide; sequence MGTRYFLVGFLILLVLGFEVQG. Residues 66-74 form a lipid binding region; it reads AVDEKIRDI. Positions 78-101 are lipoprotein lipase cofactor; it reads STAAVTTYAGIITDQVFSVLSGKD.

It belongs to the apolipoprotein C2 family. Post-translationally, proapolipoprotein C-II is synthesized as a sialic acid containing glycoprotein which is subsequently desialylated prior to its proteolytic processing. In terms of processing, proapolipoprotein C-II undergoes proteolytic cleavage of its N-terminal hexapeptide to generate apolipoprotein C-II. In bovine, proapolipoprotein C-II was found to be the minor form whereas apolipoprotein C-II was found to be the major form in plasma.

It localises to the secreted. Functionally, component of chylomicrons, very low-density lipoproteins (VLDL), low-density lipoproteins (LDL), and high-density lipoproteins (HDL) in plasma. Plays an important role in lipoprotein metabolism as an activator of lipoprotein lipase. Both proapolipoprotein C-II and apolipoprotein C-II can activate lipoprotein lipase. The polypeptide is Apolipoprotein C-II (APOC2) (Bos taurus (Bovine)).